The chain runs to 118 residues: V-type proton ATPase subunit G 1 (118 aa).

Ala-2 is subject to N-acetylalanine.

The protein belongs to the V-ATPase G subunit family. V-ATPase is a heteromultimeric enzyme made up of two complexes: the ATP-hydrolytic V1 complex and the proton translocation V0 complex. The V1 complex consists of three catalytic AB heterodimers that form a heterohexamer, three peripheral stalks each consisting of EG heterodimers, one central rotor including subunits D and F, and the regulatory subunits C and H. The proton translocation complex V0 consists of the proton transport subunit a, a ring of proteolipid subunits c9c'', rotary subunit d, subunits e and f, and the accessory subunits ATP6AP1/Ac45 and ATP6AP2/PRR. In terms of tissue distribution, kidney; localizes to early distal nephron, encompassing thick ascending limbs and distal convoluted tubules (at protein level). Ubiquitous.

It localises to the apical cell membrane. In terms of biological role, subunit of the V1 complex of vacuolar(H+)-ATPase (V-ATPase), a multisubunit enzyme composed of a peripheral complex (V1) that hydrolyzes ATP and a membrane integral complex (V0) that translocates protons. V-ATPase is responsible for acidifying and maintaining the pH of intracellular compartments and in some cell types, is targeted to the plasma membrane, where it is responsible for acidifying the extracellular environment. In aerobic conditions, involved in intracellular iron homeostasis, thus triggering the activity of Fe(2+) prolyl hydroxylase (PHD) enzymes, and leading to HIF1A hydroxylation and subsequent proteasomal degradation. This chain is V-type proton ATPase subunit G 1 (Atp6v1g1), found in Mus musculus (Mouse).